Consider the following 392-residue polypeptide: Digeranylgeranylglycerophospholipid reductase (392 aa).

FAD is bound by residues Gly15, Glu34, Cys45, Ala46, Gly48, Arg99, Ala123, Asp279, Gly291, and Ile292. Val370 provides a ligand contact to a 2,3-bis-O-(geranylgeranyl)-sn-glycerol 1-phospholipid.

Belongs to the geranylgeranyl reductase family. DGGGPL reductase subfamily. It depends on FAD as a cofactor.

It catalyses the reaction a 2,3-bis-O-phytanyl-sn-glycerol 1-phospholipid + 8 oxidized 2[4Fe-4S]-[ferredoxin] = a 2,3-bis-O-(geranylgeranyl)-sn-glycerol 1-phospholipid + 8 reduced 2[4Fe-4S]-[ferredoxin] + 16 H(+). The catalysed reaction is 2,3-bis-O-(phytanyl)-sn-glycerol 1-phosphate + 8 oxidized 2[4Fe-4S]-[ferredoxin] = 2,3-bis-O-(geranylgeranyl)-sn-glycerol 1-phosphate + 8 reduced 2[4Fe-4S]-[ferredoxin] + 16 H(+). It carries out the reaction a 2,3-bis-O-phytanyl-sn-glycerol 1-phospholipid + 8 A = a 2,3-bis-O-(geranylgeranyl)-sn-glycerol 1-phospholipid + 8 AH2. The enzyme catalyses CDP-2,3-bis-O-(geranylgeranyl)-sn-glycerol + 8 AH2 = CDP-2,3-bis-O-(phytanyl)-sn-glycerol + 8 A. It catalyses the reaction archaetidylserine + 8 AH2 = 2,3-bis-O-phytanyl-sn-glycero-3-phospho-L-serine + 8 A. Its pathway is membrane lipid metabolism; glycerophospholipid metabolism. Its function is as follows. Is involved in the reduction of 2,3-digeranylgeranylglycerophospholipids (unsaturated archaeols) into 2,3-diphytanylglycerophospholipids (saturated archaeols) in the biosynthesis of archaeal membrane lipids. Catalyzes the formation of archaetidic acid (2,3-di-O-phytanyl-sn-glyceryl phosphate) from 2,3-di-O-geranylgeranylglyceryl phosphate (DGGGP) via the hydrogenation of each double bond of the isoprenoid chains. Is also probably able to reduce double bonds of geranyl groups in CDP-2,3-bis-O-(geranylgeranyl)-sn-glycerol and archaetidylserine, thus acting at various stages in the biosynthesis of archaeal membrane lipids. The polypeptide is Digeranylgeranylglycerophospholipid reductase (Methanocella arvoryzae (strain DSM 22066 / NBRC 105507 / MRE50)).